The following is a 271-amino-acid chain: ATP synthase subunit a (271 aa).

A run of 5 helical transmembrane segments spans residues 40–60 (TINIDSMFFSVGLGLLFLVLF), 100–120 (LIAPLALTIFVWVFLMNLMDL), 146–166 (DVNVTLSMALGVFILILFYSI), 220–240 (LIFILIAGLLPWWSQWILNVP), and 242–262 (AIFHILIITLQAFIFMVLTIV).

This sequence belongs to the ATPase A chain family. In terms of assembly, F-type ATPases have 2 components, CF(1) - the catalytic core - and CF(0) - the membrane proton channel. CF(1) has five subunits: alpha(3), beta(3), gamma(1), delta(1), epsilon(1). CF(0) has three main subunits: a(1), b(2) and c(9-12). The alpha and beta chains form an alternating ring which encloses part of the gamma chain. CF(1) is attached to CF(0) by a central stalk formed by the gamma and epsilon chains, while a peripheral stalk is formed by the delta and b chains.

The protein localises to the cell inner membrane. Functionally, key component of the proton channel; it plays a direct role in the translocation of protons across the membrane. The polypeptide is ATP synthase subunit a (Shigella dysenteriae serotype 1 (strain Sd197)).